Reading from the N-terminus, the 1021-residue chain is MAGKARVHELAKELGVDSKTVLAKLKDLGEFVKSASSTVEAPVVRKLKEAFPAEGGSASGGRPGGRPGPGNGARPAPPRPGLAPRPGPRPVPGRPGPAARPGGPAAPSAPAAPSAPAPGAPAASPPASQPRPIAASAAAPPPAATSIPPVSSPAAASGPRPGPRPAGGPAAPGRARPGAPVPPPGGSAPSAPSAGGPRPGPRPGPRPSAPGNNPYTTPSAGPRQSAGQSGSGPASPPRPGAPRPGPRPGGPRPGAPGAGGPRPSPGSMPPRPGSRPGGSGGMPPRPGGSGGPRPNANMFQPRPAGGAPGRPGGGGAPGRPGGGGGGGGARPGGFAGRGGAPGRPGGGGGGGGGAGAPGRPGGGGGGRPAAGGRGRGGTTAGAFGPGGRGRPGRQRKSKRAKRQEWESGLEAPRMGAMVPRGNGQAIRLPRGASLADFADKIDANPGALVQVVFTQLGEMVTATQSCTDETLQLLGVTLGYEVQIVSPEDEDKELLESFDLSFGGEYGDDVELSIRPPVVTVMGHVDHGKTKLLDAIRFTDVVAGEAGGITQHIGAYQVRATVDGDERPITFIDTPGHETFTAMRARGAQVTDIVVLVVAADDGVKPQTIEALNHAQAAGVPVVVAVNKVDKEGADPAKVRGQLTEYGLVAEEYGGDTMFVDVSARNKTNIDGLLEAIILTADASLDLRAPTGTEAQGVAIEGRLDRGRGPVATVLVQRGTLRVGDSVVAGEAFGRVRAMLDEHGGQVTEAGPARPVQVLGFTSVPDAGDNFLVVPEDRVARQIAERRQARERNAELALSRGRPTLETILERMKEGEKTQLNLILKGDVSGSVEALEDALLKIDVGDEVGLRIIDRGVGAITETNVMLASASDAVIIGFNVRPQGKATELADREGVEVRYYSVIYQAIEDIENALKGMLKPVYEEAQLGTAEVREVFRVPRIGNVAGSLVRSGIIRRNTKARLIRDGVVVADNLTVESLKRFKDDATEVREGYECGIGLGSFNDIKIDDVIETFEQREVPRV.

Positions alanine 50–asparagine 422 are disordered. Positions serine 57–asparagine 71 are enriched in gly residues. The span at proline 75–proline 95 shows a compositional bias: pro residues. The segment covering glycine 96–alanine 112 has biased composition (low complexity). The segment covering proline 113–glutamine 129 has biased composition (pro residues). 3 stretches are compositionally biased toward low complexity: residues proline 130–proline 159, glycine 167–glycine 178, and serine 187–glycine 196. The segment covering arginine 198–serine 208 has biased composition (pro residues). Residues serine 219–proline 233 are compositionally biased toward low complexity. Composition is skewed to pro residues over residues alanine 234–glycine 254 and arginine 262–glycine 273. Gly residues-rich tracts occupy residues arginine 275–glycine 291 and glycine 306–glycine 389. Over residues arginine 390–lysine 401 the composition is skewed to basic residues. Residues isoleucine 514–aspartate 686 form the tr-type G domain. Residues glycine 523–threonine 530 form a G1 region. Glycine 523–threonine 530 contacts GTP. The G2 stretch occupies residues glycine 548–histidine 552. A G3 region spans residues aspartate 573–glycine 576. Residues aspartate 573 to histidine 577 and asparagine 627 to aspartate 630 contribute to the GTP site. The segment at asparagine 627 to aspartate 630 is G4. Positions serine 663 to arginine 665 are G5.

Belongs to the TRAFAC class translation factor GTPase superfamily. Classic translation factor GTPase family. IF-2 subfamily.

It localises to the cytoplasm. Functionally, one of the essential components for the initiation of protein synthesis. Protects formylmethionyl-tRNA from spontaneous hydrolysis and promotes its binding to the 30S ribosomal subunits. Also involved in the hydrolysis of GTP during the formation of the 70S ribosomal complex. This is Translation initiation factor IF-2 from Frankia alni (strain DSM 45986 / CECT 9034 / ACN14a).